The primary structure comprises 120 residues: MDYEFLRDITGVVKVRMSMGHEVVGHWFNEEVKENLALLDEVEDAARTLKGSERSWQRAGHEYTLWMDGEEVMVRANQLEFAGDEMEEGMNYYDEESLSLCGVEDFLQVVAAYRNFVQQK.

Belongs to the UPF0231 family.

This chain is UPF0231 protein YacL, found in Escherichia coli O81 (strain ED1a).